Reading from the N-terminus, the 1073-residue chain is Semaphorin-6D (1073 aa).

The signal sequence occupies residues 1 to 20 (MRVFLLCAYILLLMVSQLRA). The Extracellular segment spans residues 21–662 (VSFPEDDEPL…GESNQMVHMN (642 aa)). Residues 27 to 512 (DEPLNTVDYH…FSSCIIRIPL (486 aa)) form the Sema domain. The N-linked (GlcNAc...) asparagine glycan is linked to Asn51. Disulfide bonds link Cys108/Cys118, Cys136/Cys145, Cys259/Cys370, and Cys284/Cys329. N-linked (GlcNAc...) asparagine glycosylation is present at Asn283. N-linked (GlcNAc...) asparagine glycosylation is found at Asn435 and Asn461. 4 cysteine pairs are disulfide-bonded: Cys477–Cys506, Cys515–Cys533, Cys521–Cys568, and Cys525–Cys541. The 56-residue stretch at 514–569 (RCERYGSCKKSCIASRDPYCGWLSQGSCGRVTPGMLAEGYEQDTEFGNTAHLGDCH) folds into the PSI domain. The N-linked (GlcNAc...) asparagine glycan is linked to Asn631. Residues 663 to 683 (VLITCVFAAFVLGAFIAGVAV) traverse the membrane as a helical segment. Topologically, residues 684–1073 (YCYRDMFVRK…SVRPLNKYTY (390 aa)) are cytoplasmic. Phosphoserine is present on residues Ser723, Ser734, and Ser744. Disordered regions lie at residues 744–775 (SRKE…PTPE), 787–825 (AMKS…GHIP), 839–874 (TSFS…RSVD), 914–1005 (SMSE…PTPT), and 1021–1073 (LQPS…KYTY). Residue Thr773 is modified to Phosphothreonine. Basic and acidic residues predominate over residues 790–805 (SHSEKAHGHGASRKET). 3 positions are modified to phosphoserine: Ser931, Ser957, and Ser983. A compositionally biased stretch (polar residues) spans 931 to 942 (SPPSTLPRNSPT). 2 stretches are compositionally biased toward polar residues: residues 980–995 (NLNS…QPSM) and 1021–1037 (LQPS…NGTL).

Belongs to the semaphorin family.

Its subcellular location is the cell membrane. The protein localises to the cytoplasm. Functionally, shows growth cone collapsing activity on dorsal root ganglion (DRG) neurons in vitro. May be a stop signal for the DRG neurons in their target areas, and possibly also for other neurons. May also be involved in the maintenance and remodeling of neuronal connections. Ligand of TREM2 with PLXNA1 as coreceptor in dendritic cells, plays a role in the generation of immune responses and skeletal homeostasis. This Homo sapiens (Human) protein is Semaphorin-6D.